Reading from the N-terminus, the 907-residue chain is Glutamate receptor 1 (907 aa).

The N-terminal stretch at 1 to 18 (MPYIFAFFCTGFLGAVVG) is a signal peptide. The Extracellular portion of the chain corresponds to 19–536 (ANFPNNIQIG…GVFSFLDPLA (518 aa)). 6 N-linked (GlcNAc...) asparagine glycosylation sites follow: N63, N249, N257, N363, N401, and N406. A disulfide bridge links C75 with C323. The L-glutamate site is built by P492, T494, and R499. Residues 537 to 557 (YEIWMCIVFAYIGVSVVLFLV) traverse the membrane as a helical segment. Residues 558-584 (SRFSPYEWHSEEFEEGRDQTTSDQSNE) lie on the Cytoplasmic side of the membrane. Positions 585-600 (FGIFNSLWFSLGAFMQ) form an intramembrane region, helical; Pore-forming. An intramembrane segment occupies 601–603 (QGC). Residue C603 is the site of S-palmitoyl cysteine attachment. The Cytoplasmic segment spans residues 604–609 (DISPRS). Residues 610 to 630 (LSGRIVGGVWWFFTLIIISSY) form a helical membrane-spanning segment. Over 631–805 (TANLAAFLTV…DKTSALSLSN (175 aa)) the chain is Extracellular. The residue at position 645 (S645) is a Phosphoserine. Residues S668 and T669 each coordinate L-glutamate. S710 bears the Phosphoserine; by PKC mark. L-glutamate is bound at residue E719. Cysteines 732 and 787 form a disulfide. The chain crosses the membrane as a helical span at residues 806–826 (VAGVFYILIGGLGLAMLVALI). Residues 827-907 (EFCYKSRSES…SGMPLGATGL (81 aa)) lie on the Cytoplasmic side of the membrane. C829 carries S-palmitoyl cysteine lipidation. The residue at position 849 (S849) is a Phosphoserine; by PKC, PKA and CAMK2. Residues 857–881 (STLPRNSGAGASGGGGSGENGRVVS) form a disordered region. At S863 the chain carries Phosphoserine; by PKC, PKA and PKG/PRKG2. The span at 866-875 (GASGGGGSGE) shows a compositional bias: gly residues. The PDZ-binding motif lies at 904-907 (ATGL).

This sequence belongs to the glutamate-gated ion channel (TC 1.A.10.1) family. GRIA1 subfamily. Homotetramer or heterotetramer of pore-forming glutamate receptor subunits; heteromeric assembly can be the result of both receptor subtype and flip-flop forms and according the composition, one partner can be dominant with respect to the fast desensitizing current component, whereas the other can determine the steady-state component. Tetramers may be formed by the dimerization of dimers. Found in a complex with GRIA2, GRIA3, GRIA4, CNIH2, CNIH3, CACNG2, CACNG3, CACNG4, CACNG5, CACNG7 and CACNG8. Interacts with HIP1 and RASGRF2. Interacts with SYNDIG1 and GRIA2. Interacts with DLG1 (via C-terminus). Interacts with LRFN1. Interacts with PRKG2. Interacts with CNIH2 and CACNG2. Interacts with CACNG5; this interaction modulates the gating. Interacts (via C-terminus) with PDLIM4 (via LIM domain); this interaction as well as the interaction of PDLIM4 with alpha-actinin is required for their colocalization in early endosomes. Interacts with SNX27 (via PDZ domain); the interaction is required for recycling to the plasma membrane when endocytosed and prevent degradation in lysosomes. Interacts (via PDZ-binding motif) with SHANK3 (via PDZ domain). Interacts with CACNG3; associates GRIA1 with the adapter protein complex 4 (AP-4) to target GRIA1 to the somatodendritic compartment of neurons. Interacts with CACNG2; this interaction mediates traffick to the plasma membrane and modulation of desensitization. Interaction with CNIH2 and CNIH3; this interaction promotes expression at the plasma membrane and extensively modulates their gating properties by slowing deactivation and desensitization kinetics. Found in a complex with GRIA2, GRIA3, GRIA4, DLG4, CACNG8 and CNIH2. In terms of processing, phosphorylated at Ser-645. Phosphorylated at Ser-710 by PKC. Phosphorylated at Ser-849 by PKC, PKA and CAMK2. Phosphorylated at Ser-863 by PKC, PKA and PRKG2. Phosphorylation of Ser-863 is reduced by induction of long-term depression and increased by induction of long-term potentiation. Palmitoylated. Depalmitoylated by CPT1C and upon L-glutamate stimulation. ZDHHC3/GODZ specifically palmitoylates Cys-603, which leads to Golgi retention and decreased cell surface expression. In contrast, Cys-829 palmitoylation does not affect cell surface expression but regulates stimulation-dependent endocytosis. In terms of tissue distribution, detected in cerebellum (at protein level).

It localises to the cell membrane. It is found in the endoplasmic reticulum membrane. The protein resides in the postsynaptic cell membrane. The protein localises to the postsynaptic density membrane. Its subcellular location is the cell projection. It localises to the dendrite. It is found in the dendritic spine. The protein resides in the early endosome membrane. The protein localises to the recycling endosome membrane. Its subcellular location is the presynapse. It localises to the synapse. It catalyses the reaction Ca(2+)(in) = Ca(2+)(out). The catalysed reaction is Na(+)(in) = Na(+)(out). The enzyme catalyses Mg(2+)(in) = Mg(2+)(out). It carries out the reaction Li(+)(in) = Li(+)(out). It catalyses the reaction K(+)(in) = K(+)(out). The catalysed reaction is Sr(2+)(in) = Sr(2+)(out). With respect to regulation, glutamate-gated receptor activity inhibited by DNQX (6,7-dinitroquinoxaline-2,3-dione). Functionally, ionotropic glutamate receptor that functions as a ligand-gated cation channel, gated by L-glutamate and glutamatergic agonists such as alpha-amino-3-hydroxy-5-methyl-4-isoxazolepropionic acid (AMPA), quisqualic acid, and kainic acid. L-glutamate acts as an excitatory neurotransmitter at many synapses in the central nervous system. Binding of the excitatory neurotransmitter L-glutamate induces a conformation change, leading to the opening of the cation channel, and thereby converts the chemical signal to an electrical impulse upon entry of monovalent and divalent cations such as sodium and calcium. The receptor then desensitizes rapidly and enters in a transient inactive state, characterized by the presence of bound agonist. In the presence of CACNG2 or CACNG4 or CACNG7 or CACNG8, shows resensitization which is characterized by a delayed accumulation of current flux upon continued application of L-glutamate. Resensitization is blocked by CNIH2 through interaction with CACNG8 in the CACNG8-containing AMPA receptors complex. Calcium (Ca(2+)) permeability depends on subunits composition and, heteromeric channels containing edited GRIA2 subunit are calcium-impermeable. Also permeable to other divalents cations such as strontium(2+) and magnesium(2+) and monovalent cations such as potassium(1+) and lithium(1+). This is Glutamate receptor 1 from Rattus norvegicus (Rat).